Consider the following 180-residue polypeptide: NADH-quinone oxidoreductase subunit I (180 aa).

4Fe-4S ferredoxin-type domains are found at residues 48 to 80 (IVLT…LQKA) and 90 to 119 (EFFR…LTPD). Residues Cys60, Cys63, Cys66, Cys70, Cys99, Cys102, Cys105, and Cys109 each coordinate [4Fe-4S] cluster. The segment at 160–180 (GKPKGSAQKEAAPIDVKSILP) is disordered.

Belongs to the complex I 23 kDa subunit family. NDH-1 is composed of 14 different subunits. Subunits NuoA, H, J, K, L, M, N constitute the membrane sector of the complex. Requires [4Fe-4S] cluster as cofactor.

It is found in the cell inner membrane. The enzyme catalyses a quinone + NADH + 5 H(+)(in) = a quinol + NAD(+) + 4 H(+)(out). Functionally, NDH-1 shuttles electrons from NADH, via FMN and iron-sulfur (Fe-S) centers, to quinones in the respiratory chain. The immediate electron acceptor for the enzyme in this species is believed to be ubiquinone. Couples the redox reaction to proton translocation (for every two electrons transferred, four hydrogen ions are translocated across the cytoplasmic membrane), and thus conserves the redox energy in a proton gradient. The chain is NADH-quinone oxidoreductase subunit I from Tolumonas auensis (strain DSM 9187 / NBRC 110442 / TA 4).